We begin with the raw amino-acid sequence, 418 residues long: Tyrosine--tRNA ligase (418 aa).

An L-tyrosine-binding site is contributed by Tyr-34. A 'HIGH' region motif is present at residues 39 to 48; that stretch reads PTGDSMHIGH. L-tyrosine contacts are provided by Tyr-166 and Gln-170. Positions 228–232 match the 'KMSKS' region motif; sequence KFGKT. Residue Lys-231 participates in ATP binding. The region spanning 350-418 is the S4 RNA-binding domain; the sequence is QNIVLWLVDA…KKRYFLAHVK (69 aa).

The protein belongs to the class-I aminoacyl-tRNA synthetase family. TyrS type 1 subfamily. In terms of assembly, homodimer.

The protein localises to the cytoplasm. It carries out the reaction tRNA(Tyr) + L-tyrosine + ATP = L-tyrosyl-tRNA(Tyr) + AMP + diphosphate + H(+). In terms of biological role, catalyzes the attachment of tyrosine to tRNA(Tyr) in a two-step reaction: tyrosine is first activated by ATP to form Tyr-AMP and then transferred to the acceptor end of tRNA(Tyr). The sequence is that of Tyrosine--tRNA ligase from Lactiplantibacillus plantarum (strain ATCC BAA-793 / NCIMB 8826 / WCFS1) (Lactobacillus plantarum).